The sequence spans 44 residues: Thioredoxin (44 aa).

The Thioredoxin domain maps to 2–44 (IELDKSNFEEEVLKAEGTVLVDFWSPSCEPCKALMPHVHDFEE). The cysteines at positions 29 and 32 are disulfide-linked.

This sequence belongs to the thioredoxin family.

Participates in various redox reactions through the reversible oxidation of its active center dithiol to a disulfide and catalyzes dithiol-disulfide exchange reactions. This Tissierella creatinophila protein is Thioredoxin (trxA).